A 309-amino-acid chain; its full sequence is Taste receptor type 2 member 114 (309 aa).

At 1–7 (MLSTMEG) the chain is on the extracellular side. The helical transmembrane segment at 8–28 (VLLSVSTSEAVLGIVGNTFIA) threads the bilayer. Over 29-43 (LVNCMDYNRNKKLSN) the chain is Cytoplasmic. A helical membrane pass occupies residues 44–64 (IGFILTGLAISRICLVLILIT). The Extracellular portion of the chain corresponds to 65 to 87 (EAYIKIFYPQLLSPVNIIELISY). A helical membrane pass occupies residues 88 to 108 (LWIIICQLNVWFATSLSIFYF). The Cytoplasmic portion of the chain corresponds to 109 to 127 (LKIANFSHYIFVWLKRRID). A helical membrane pass occupies residues 128–148 (LVFFFLIGCLLISWLFSFPVV). At 149 to 182 (AKMVKDNKMLYINTSWQIHMKKSELIINYVFTNG) the chain is on the extracellular side. Residue asparagine 161 is glycosylated (N-linked (GlcNAc...) asparagine). A helical transmembrane segment spans residues 183–203 (GVFLFFMIMLIVCFLLIISLW). Topologically, residues 204–233 (RHRRQMESNKLGFRDLNTEVHVRTIKVLLS) are cytoplasmic. The chain crosses the membrane as a helical span at residues 234–254 (FIILFILHFMGITINVICLLI). At 255–259 (PESNL) the chain is on the extracellular side. The helical transmembrane segment at 260–280 (LFMFGLTTAFIYPGCHSLILI) threads the bilayer. The Cytoplasmic segment spans residues 281 to 309 (LANSRLKQCSVMILQLLKCCENGKELRDT).

It belongs to the G-protein coupled receptor T2R family.

Its subcellular location is the membrane. In terms of biological role, putative taste receptor which may play a role in the perception of bitterness. The sequence is that of Taste receptor type 2 member 114 from Mus musculus (Mouse).